Here is a 299-residue protein sequence, read N- to C-terminus: MTFKSGFVAILGRPNVGKSTFLNYVMGQKIAIMSDKAQTTRNKIMGIYTTEEEQIVFIDTPGIHKPKTALGDFMVESAYSTLREVDTVLFMVPADEKRGKGDDMIMERLKQAKVPVILVVNKIDKVHPDQLLEQIDDFRQQMDFKEIVPISATQGNNVNRLMEILKENLDEGFQYFPADQITDHPERFLVSEMIREKVLHLTREEIPHSVAVVIESMKRDEFTDKVHIRATIMVERDSQKGIIIGKQGAMLKKIGSMARRDIELMLGDKVFLETWVKVKKNWRDKKLDLADFGYNEKEY.

The region spanning lysine 4–glutamate 171 is the Era-type G domain. The interval glycine 12–serine 19 is G1. Glycine 12 to serine 19 provides a ligand contact to GTP. Residues glutamine 38–asparagine 42 are G2. A G3 region spans residues aspartate 59–glycine 62. GTP is bound by residues aspartate 59 to isoleucine 63 and asparagine 121 to aspartate 124. Positions asparagine 121–aspartate 124 are G4. A G5 region spans residues isoleucine 150–alanine 152. The region spanning threonine 202–lysine 280 is the KH type-2 domain.

This sequence belongs to the TRAFAC class TrmE-Era-EngA-EngB-Septin-like GTPase superfamily. Era GTPase family. As to quaternary structure, monomer.

Its subcellular location is the cytoplasm. The protein localises to the cell membrane. Its function is as follows. An essential GTPase that binds both GDP and GTP, with rapid nucleotide exchange. Plays a role in 16S rRNA processing and 30S ribosomal subunit biogenesis and possibly also in cell cycle regulation and energy metabolism. The protein is GTPase Era of Streptococcus suis (strain 98HAH33).